Here is a 376-residue protein sequence, read N- to C-terminus: Phosphoserine aminotransferase (376 aa).

R54 contacts L-glutamate. Pyridoxal 5'-phosphate is bound by residues A88–T89, W115, T165, D186, and Q209. The residue at position 210 (K210) is an N6-(pyridoxal phosphate)lysine. Pyridoxal 5'-phosphate is bound at residue N251–T252.

The protein belongs to the class-V pyridoxal-phosphate-dependent aminotransferase family. SerC subfamily. As to quaternary structure, homodimer. Requires pyridoxal 5'-phosphate as cofactor.

It is found in the cytoplasm. It carries out the reaction O-phospho-L-serine + 2-oxoglutarate = 3-phosphooxypyruvate + L-glutamate. It catalyses the reaction 4-(phosphooxy)-L-threonine + 2-oxoglutarate = (R)-3-hydroxy-2-oxo-4-phosphooxybutanoate + L-glutamate. The protein operates within amino-acid biosynthesis; L-serine biosynthesis; L-serine from 3-phospho-D-glycerate: step 2/3. It functions in the pathway cofactor biosynthesis; pyridoxine 5'-phosphate biosynthesis; pyridoxine 5'-phosphate from D-erythrose 4-phosphate: step 3/5. Its function is as follows. Catalyzes the reversible conversion of 3-phosphohydroxypyruvate to phosphoserine and of 3-hydroxy-2-oxo-4-phosphonooxybutanoate to phosphohydroxythreonine. The protein is Phosphoserine aminotransferase of Rhodopirellula baltica (strain DSM 10527 / NCIMB 13988 / SH1).